The chain runs to 334 residues: GTP 3',8-cyclase (334 aa).

One can recognise a Radical SAM core domain in the interval 11 to 236; it reads GFNRKIDYLR…ESTESSQGPA (226 aa). GTP is bound at residue arginine 20. Cysteine 27 and cysteine 31 together coordinate [4Fe-4S] cluster. An S-adenosyl-L-methionine-binding site is contributed by tyrosine 33. Cysteine 34 is a [4Fe-4S] cluster binding site. GTP is bound at residue arginine 69. Glycine 73 is a binding site for S-adenosyl-L-methionine. GTP is bound at residue threonine 100. Position 124 (serine 124) interacts with S-adenosyl-L-methionine. Position 161 (lysine 161) interacts with GTP. Methionine 195 is an S-adenosyl-L-methionine binding site. The [4Fe-4S] cluster site is built by cysteine 260 and cysteine 263. 265-267 contributes to the GTP binding site; that stretch reads RVR. Residue cysteine 277 participates in [4Fe-4S] cluster binding.

Belongs to the radical SAM superfamily. MoaA family. As to quaternary structure, monomer and homodimer. It depends on [4Fe-4S] cluster as a cofactor.

It catalyses the reaction GTP + AH2 + S-adenosyl-L-methionine = (8S)-3',8-cyclo-7,8-dihydroguanosine 5'-triphosphate + 5'-deoxyadenosine + L-methionine + A + H(+). It functions in the pathway cofactor biosynthesis; molybdopterin biosynthesis. In terms of biological role, catalyzes the cyclization of GTP to (8S)-3',8-cyclo-7,8-dihydroguanosine 5'-triphosphate. The sequence is that of GTP 3',8-cyclase from Pseudomonas putida (strain GB-1).